The sequence spans 259 residues: uncharacterized protein (259 aa).

A signal peptide spans 1–22 (MKHSKKLLLCISFLLITVFISG). Residue cysteine 23 is the site of N-palmitoyl cysteine attachment. Cysteine 23 carries S-diacylglycerol cysteine lipidation.

The protein belongs to the staphylococcal tandem lipoprotein family.

The protein localises to the cell membrane. This is an uncharacterized protein from Staphylococcus epidermidis (strain ATCC 35984 / DSM 28319 / BCRC 17069 / CCUG 31568 / BM 3577 / RP62A).